The sequence spans 889 residues: Disease resistance protein UNI (889 aa).

Residues 19 to 64 (NCLIGKSYIRTLEKNLRALQREMEDLRAIQHEVQNKVARDEARHQR) adopt a coiled-coil conformation. The interval 131–152 (GNFDEVSQPPPRSEVEERPTQP) is disordered. The NB-ARC domain occupies 137 to 440 (SQPPPRSEVE…CEGFIGEDQV (304 aa)). 179 to 186 (GMGGVGKT) contributes to the ATP binding site. LRR repeat units follow at residues 510-532 (WGAV…ESKC), 533-555 (SELT…FIRY), 557-580 (QKLV…ISGL), 581-603 (VSLQ…LKEL), 604-625 (KKLT…GISR), 626-652 (LLSL…LQQL), 653-676 (QNLQ…LAKL), 698-721 (MENL…ESET), and 825-848 (CPKL…EIHM).

The protein belongs to the disease resistance NB-LRR family. In terms of assembly, interacts with RPT2A.

In terms of biological role, involved in disease resistance via the salicylic acid (SA) signaling pathway. Involved in shoot architecture development via the cytokinin signaling pathway. The sequence is that of Disease resistance protein UNI from Arabidopsis thaliana (Mouse-ear cress).